The primary structure comprises 173 residues: Transcriptional regulator ERG homolog (173 aa).

A DNA-binding region (ETS) is located at residues 1 to 84; that stretch reads SGQIQLWQFL…HGKRYAYKFD (84 aa).

Belongs to the ETS family.

Its subcellular location is the nucleus. Functionally, acts as a transcriptional activator. The chain is Transcriptional regulator ERG homolog (ERG) from Lytechinus variegatus (Green sea urchin).